The chain runs to 162 residues: Peroxiredoxin-2C (162 aa).

One can recognise a Thioredoxin domain in the interval 4–162; it reads VAVGDTLPDG…SGAEEILKAL (159 aa). Cys-51 serves as the catalytic Cysteine sulfenic acid (-SOH) intermediate.

It belongs to the peroxiredoxin family. Prx5 subfamily. As to quaternary structure, monomer.

Its subcellular location is the cytoplasm. The catalysed reaction is [glutaredoxin]-dithiol + a hydroperoxide = [glutaredoxin]-disulfide + an alcohol + H2O. Reduces hydrogen peroxide and alkyl hydroperoxides with reducing equivalents provided through the thioredoxin or glutaredoxin system. May be involved in intracellular redox signaling. Its function is as follows. Thiol-specific peroxidase that catalyzes the reduction of hydrogen peroxide and organic hydroperoxides to water and alcohols, respectively. Plays a role in cell protection against oxidative stress by detoxifying peroxides. The polypeptide is Peroxiredoxin-2C (PRXIIC) (Oryza sativa subsp. japonica (Rice)).